The sequence spans 365 residues: 3,4-dihydroxy-2-butanone 4-phosphate synthase (365 aa).

The DHBP synthase stretch occupies residues 1–201 (MALNTIDELI…IADLIHYRLI (201 aa)). Residues 27 to 28 (RE), D32, 140 to 144 (RAGHT), and E164 contribute to the D-ribulose 5-phosphate site. E28 provides a ligand contact to Mg(2+). Mg(2+) is bound at residue H143. Residues 202-365 (HERTVERIAE…LEVVEYLPAE (164 aa)) are GTP cyclohydrolase II-like.

It in the N-terminal section; belongs to the DHBP synthase family. In the C-terminal section; belongs to the GTP cyclohydrolase II family. It depends on Mg(2+) as a cofactor. Mn(2+) is required as a cofactor.

It carries out the reaction D-ribulose 5-phosphate = (2S)-2-hydroxy-3-oxobutyl phosphate + formate + H(+). It functions in the pathway cofactor biosynthesis; riboflavin biosynthesis; 2-hydroxy-3-oxobutyl phosphate from D-ribulose 5-phosphate: step 1/1. In terms of biological role, catalyzes the conversion of D-ribulose 5-phosphate to formate and 3,4-dihydroxy-2-butanone 4-phosphate. This chain is 3,4-dihydroxy-2-butanone 4-phosphate synthase (ribB), found in Pseudomonas aeruginosa (strain ATCC 15692 / DSM 22644 / CIP 104116 / JCM 14847 / LMG 12228 / 1C / PRS 101 / PAO1).